A 132-amino-acid chain; its full sequence is Small ribosomal subunit protein uS8 (132 aa).

Belongs to the universal ribosomal protein uS8 family. In terms of assembly, part of the 30S ribosomal subunit. Contacts proteins S5 and S12.

Functionally, one of the primary rRNA binding proteins, it binds directly to 16S rRNA central domain where it helps coordinate assembly of the platform of the 30S subunit. This Bartonella henselae (strain ATCC 49882 / DSM 28221 / CCUG 30454 / Houston 1) (Rochalimaea henselae) protein is Small ribosomal subunit protein uS8.